We begin with the raw amino-acid sequence, 270 residues long: Tryptophan synthase alpha chain (270 aa).

Residues Glu-49 and Asp-60 each act as proton acceptor in the active site.

Belongs to the TrpA family. In terms of assembly, tetramer of two alpha and two beta chains.

It carries out the reaction (1S,2R)-1-C-(indol-3-yl)glycerol 3-phosphate + L-serine = D-glyceraldehyde 3-phosphate + L-tryptophan + H2O. It participates in amino-acid biosynthesis; L-tryptophan biosynthesis; L-tryptophan from chorismate: step 5/5. The alpha subunit is responsible for the aldol cleavage of indoleglycerol phosphate to indole and glyceraldehyde 3-phosphate. The chain is Tryptophan synthase alpha chain from Buchnera aphidicola subsp. Diuraphis noxia.